The chain runs to 354 residues: Guanine nucleotide-binding protein G(o) subunit alpha (354 aa).

Gly-2 carries the N-myristoyl glycine lipid modification. The S-palmitoyl cysteine moiety is linked to residue Cys-3. A G-alpha domain is found at 32-354; it reads KDVKLLLLGA…ANNLRGCGLY (323 aa). Positions 35-48 are G1 motif; the sequence is KLLLLGAGESGKST. Residues Glu-43, Lys-46, Ser-47, Thr-48, Ser-152, Leu-176, Arg-177, Thr-178, and Arg-179 each contribute to the GTP site. Ser-47 is a Mg(2+) binding site. The tract at residues 174 to 182 is G2 motif; it reads DILRTRVKT. Residue Thr-182 coordinates Mg(2+). Residues 197 to 206 are G3 motif; sequence FRLFDVGGQR. 5-glutamyl histamine is present on Gln-205. The tract at residues 266–273 is G4 motif; it reads ILFLNKKD. The GTP site is built by Asn-270, Asp-273, and Cys-325. A G5 motif region spans residues 324–329; it reads TCATDT. Cys-351 is lipidated: S-palmitoyl cysteine.

This sequence belongs to the G-alpha family. G(i/o/t/z) subfamily. In terms of assembly, g proteins are composed of 3 units; alpha, beta and gamma. The alpha chain contains the guanine nucleotide binding site. Forms a complex with GNB1 and GNG3. Interacts with RGS14. Interacts with RGS16. Interacts with RGS19. Interacts (when palmitoylated) with ADGRG3. In terms of processing, histaminylated at Gln-205 residues by TGM2.

The protein localises to the cell membrane. The protein resides in the membrane. The catalysed reaction is GTP + H2O = GDP + phosphate + H(+). With respect to regulation, the GTPase activity is promoted by GTPAse activators, such as RGS14, RGS16 and RGS19. Guanine nucleotide-binding proteins (G proteins) function as transducers downstream of G protein-coupled receptors (GPCRs) in numerous signaling cascades. The alpha chain contains the guanine nucleotide binding site and alternates between an active, GTP-bound state and an inactive, GDP-bound state. Signaling by an activated GPCR promotes GDP release and GTP binding. The alpha subunit has a low GTPase activity that converts bound GTP to GDP, thereby terminating the signal. Both GDP release and GTP hydrolysis are modulated by numerous regulatory proteins. Signaling is mediated via effector proteins, such as adenylate cyclase. Inhibits adenylate cyclase activity, leading to decreased intracellular cAMP levels. The chain is Guanine nucleotide-binding protein G(o) subunit alpha (GNAO1) from Bos taurus (Bovine).